The chain runs to 128 residues: Iron-sulfur cluster insertion protein ErpA (128 aa).

3 residues coordinate iron-sulfur cluster: Cys-56, Cys-120, and Cys-122.

This sequence belongs to the HesB/IscA family. In terms of assembly, homodimer. Requires iron-sulfur cluster as cofactor.

Functionally, required for insertion of 4Fe-4S clusters for at least IspG. The protein is Iron-sulfur cluster insertion protein ErpA of Xanthomonas campestris pv. campestris (strain 8004).